The chain runs to 74 residues: MSKIQYPMTTAAIFDDVVYPLHFDNAGKVRQEMEGAVNWFCRWCNEEKAAVKARLLVSCWGQYLSHEQVIREAA.

This chain is Putative protein ninY (ninY), found in Salmonella phage P22 (Bacteriophage P22).